The primary structure comprises 146 residues: Hemoglobin subunit beta (146 aa).

V1 is modified (N-acetylvaline). The Globin domain occupies H2–H146. A Phosphothreonine modification is found at T12. S44 is subject to Phosphoserine. K59 is modified (N6-acetyllysine). H63 is a binding site for heme b. Position 82 is an N6-acetyllysine (K82). H92 serves as a coordination point for heme b. C93 bears the S-nitrosocysteine mark. K144 is subject to N6-acetyllysine.

Belongs to the globin family. In terms of assembly, heterotetramer of two alpha chains and two beta chains. As to expression, red blood cells.

Involved in oxygen transport from the lung to the various peripheral tissues. This chain is Hemoglobin subunit beta (HBB), found in Procyon lotor (Raccoon).